The sequence spans 229 residues: Cytochrome c oxidase subunit 2 (229 aa).

Residues 1–26 (MATWMNINLQDANSSTMEQLTMFHDH) are Mitochondrial intermembrane-facing. Residues 27–48 (TLMILTMITSIVTFIMVSMTTN) form a helical membrane-spanning segment. Over 49–62 (TLINRYLLEGQTIE) the chain is Mitochondrial matrix. The chain crosses the membrane as a helical span at residues 63-82 (FIWTTIPAITLIFIALPSLH). Residues 83 to 229 (LLYLIDEINN…LKWINKSLSS (147 aa)) are Mitochondrial intermembrane-facing. Residues His-161, Cys-196, Glu-198, Cys-200, His-204, and Met-207 each coordinate Cu cation. Residue Glu-198 coordinates Mg(2+).

This sequence belongs to the cytochrome c oxidase subunit 2 family. As to quaternary structure, component of the cytochrome c oxidase (complex IV, CIV), a multisubunit enzyme composed of a catalytic core of 3 subunits and several supernumerary subunits. The complex exists as a monomer or a dimer and forms supercomplexes (SCs) in the inner mitochondrial membrane with ubiquinol-cytochrome c oxidoreductase (cytochrome b-c1 complex, complex III, CIII). Cu cation is required as a cofactor.

The protein resides in the mitochondrion inner membrane. It carries out the reaction 4 Fe(II)-[cytochrome c] + O2 + 8 H(+)(in) = 4 Fe(III)-[cytochrome c] + 2 H2O + 4 H(+)(out). Component of the cytochrome c oxidase, the last enzyme in the mitochondrial electron transport chain which drives oxidative phosphorylation. The respiratory chain contains 3 multisubunit complexes succinate dehydrogenase (complex II, CII), ubiquinol-cytochrome c oxidoreductase (cytochrome b-c1 complex, complex III, CIII) and cytochrome c oxidase (complex IV, CIV), that cooperate to transfer electrons derived from NADH and succinate to molecular oxygen, creating an electrochemical gradient over the inner membrane that drives transmembrane transport and the ATP synthase. Cytochrome c oxidase is the component of the respiratory chain that catalyzes the reduction of oxygen to water. Electrons originating from reduced cytochrome c in the intermembrane space (IMS) are transferred via the dinuclear copper A center (CU(A)) of subunit 2 and heme A of subunit 1 to the active site in subunit 1, a binuclear center (BNC) formed by heme A3 and copper B (CU(B)). The BNC reduces molecular oxygen to 2 water molecules using 4 electrons from cytochrome c in the IMS and 4 protons from the mitochondrial matrix. The chain is Cytochrome c oxidase subunit 2 (COII) from Oncopeltus fasciatus (Large milkweed bug).